The primary structure comprises 123 residues: DPEP2 neighbor protein (123 aa).

The interval 67–123 (APLATPTKAEAEKPAPRRAPKRRQATIESDKDLGCSSPKIRRLEHRGRRLTPQKLAG) is disordered. Over residues 105–117 (KIRRLEHRGRRLT) the composition is skewed to basic residues.

This Homo sapiens (Human) protein is DPEP2 neighbor protein.